Here is a 175-residue protein sequence, read N- to C-terminus: Shikimate kinase (175 aa).

17-22 lines the ATP pocket; sequence GAGKST. S21 lines the Mg(2+) pocket. Substrate contacts are provided by D39, R63, and G85. R123 contributes to the ATP binding site. Substrate is bound at residue R142. ATP is bound at residue Q159.

It belongs to the shikimate kinase family. In terms of assembly, monomer. Mg(2+) is required as a cofactor.

The protein localises to the cytoplasm. It carries out the reaction shikimate + ATP = 3-phosphoshikimate + ADP + H(+). Its pathway is metabolic intermediate biosynthesis; chorismate biosynthesis; chorismate from D-erythrose 4-phosphate and phosphoenolpyruvate: step 5/7. Functionally, catalyzes the specific phosphorylation of the 3-hydroxyl group of shikimic acid using ATP as a cosubstrate. This is Shikimate kinase from Photobacterium profundum (strain SS9).